A 216-amino-acid polypeptide reads, in one-letter code: V-type ATP synthase subunit D (216 aa).

This sequence belongs to the V-ATPase D subunit family.

Produces ATP from ADP in the presence of a proton gradient across the membrane. This chain is V-type ATP synthase subunit D, found in Clostridium botulinum (strain Loch Maree / Type A3).